A 266-amino-acid polypeptide reads, in one-letter code: 3-methyl-2-oxobutanoate hydroxymethyltransferase (266 aa).

Mg(2+) contacts are provided by Asp-45 and Asp-84. Residues 45–46, Asp-84, and Lys-112 each bind 3-methyl-2-oxobutanoate; that span reads DS. Glu-114 lines the Mg(2+) pocket. The Proton acceptor role is filled by Glu-181.

The protein belongs to the PanB family. As to quaternary structure, homodecamer; pentamer of dimers. Mg(2+) serves as cofactor.

It is found in the cytoplasm. The catalysed reaction is 3-methyl-2-oxobutanoate + (6R)-5,10-methylene-5,6,7,8-tetrahydrofolate + H2O = 2-dehydropantoate + (6S)-5,6,7,8-tetrahydrofolate. Its pathway is cofactor biosynthesis; (R)-pantothenate biosynthesis; (R)-pantoate from 3-methyl-2-oxobutanoate: step 1/2. Functionally, catalyzes the reversible reaction in which hydroxymethyl group from 5,10-methylenetetrahydrofolate is transferred onto alpha-ketoisovalerate to form ketopantoate. In Pseudomonas fluorescens (strain SBW25), this protein is 3-methyl-2-oxobutanoate hydroxymethyltransferase.